The chain runs to 129 residues: MGRIFTVELEGRSYRCRFCRTHLALPDDLVSRSFHCRRGKAYLFNRSVNISMGPLEERLMLSGMHTVADIFCCCCGQNVGWKYESAHEKAQKYKEGKFVLERGRIVDEIDLSTEVYIDTHGSTSDTEDS.

The 98-residue stretch at 12 to 109 folds into the Yippee domain; sequence RSYRCRFCRT…LERGRIVDEI (98 aa). Positions 16, 19, 72, and 75 each coordinate Zn(2+).

It belongs to the yippee family.

The polypeptide is Protein yippee-like At5g53940 (Arabidopsis thaliana (Mouse-ear cress)).